A 249-amino-acid chain; its full sequence is 14-3-3-like protein D (249 aa).

The protein belongs to the 14-3-3 family.

The chain is 14-3-3-like protein D from Nicotiana tabacum (Common tobacco).